Here is a 921-residue protein sequence, read N- to C-terminus: Alanine--tRNA ligase (921 aa).

Zn(2+) contacts are provided by His602, His606, Cys706, and His710.

It belongs to the class-II aminoacyl-tRNA synthetase family. Zn(2+) is required as a cofactor.

Its subcellular location is the cytoplasm. The enzyme catalyses tRNA(Ala) + L-alanine + ATP = L-alanyl-tRNA(Ala) + AMP + diphosphate. Functionally, catalyzes the attachment of alanine to tRNA(Ala) in a two-step reaction: alanine is first activated by ATP to form Ala-AMP and then transferred to the acceptor end of tRNA(Ala). Also edits incorrectly charged Ser-tRNA(Ala) and Gly-tRNA(Ala) via its editing domain. This chain is Alanine--tRNA ligase, found in Hyperthermus butylicus (strain DSM 5456 / JCM 9403 / PLM1-5).